The primary structure comprises 1019 residues: MSIILWSFFLFFTIILSSLTNITTLASFSSLHADELNALKEIATTLGIKRLNLRDEDPCSSKTLKIIQEVDFVPNLDINNTIGCDCSFNNNTICRITELALKTMSLRGKLPPELTKLPYLKSIELCRNYLSGTIPMEWAKMAYLTSISVCANNLSGNLPAGLQNFKNLTFLGVEGNQFSGPIPDELGNLTSLTGLELASNKFTGILPGTLARLVNLERVRICDNNFTGIIPAYIGNWTRLQKLHLYASGLTGPIPDAVVRLENLLELSLSDTTGIKSFPNLSSKGLKRLILRNVGLSGPIPSYIWNLTDLKILDLSFNKLNGIVQGVQNPPKNIYLTGNLLSGNIESGGLLNSQSYIDLSYNNFSWSSSCQKGSTINTYQSSYSKNNLTGLPPCAVPANCKKYQRFLHINCGGEEVSIRNSLGKITYQTDNSRQTNAASNQQFDYWGVSNTGDFTDDNSDHDEYYTSTNLTLSGDYPDLYKTARRSALSLVYYAFCLENGNYNVKLHFMEIQFSDKEVYSRLGRRIFDVYVQGKLFLRDFNINKEANGNMKPVIKEINATVTNHMLEIRLYWAGKGTTLIPKRGNYGPLISAISLCHSQEPLCGVEKTKHHIKYPLILGASGALVTIVLLAVGIYARGIYRRDNNRRERDLRAQGLQTVCFSWRQLQTATNNFDQANKLGEGGFGSVFKGELSDGTIIAVKQLSSKSSQGNREFVNEIGMISGLNHPNLVKLYGCCVERDQLLLVYEYMENNSLALALFGQNSLKLDWAARQKICVGIARGLEFLHDGSAMRMVHRDIKTTNVLLDTDLNAKISDFGLARLHEAEHTHISTKVAGTIGYMAPEYALWGQLTEKADVYSFGVVAMEIVSGKSNTKQQGNADSVSLINWALTLQQTGDILEIVDRMLEGEFNRSEAVRMIKVALVCTNSSPSLRPTMSEAVKMLEGEIEITQVMSDPGIYGHDWSISKLRDIDTHSSSSTSGVTDQTTTTMKSSVSGCDLYPLYPESMILNSTVENSSSSL.

The signal sequence occupies residues 1 to 19 (MSIILWSFFLFFTIILSSL). Topologically, residues 20–615 (TNITTLASFS…EKTKHHIKYP (596 aa)) are extracellular. 3 N-linked (GlcNAc...) asparagine glycosylation sites follow: N21, N79, and N90. LRR repeat units follow at residues 93-117 (ICRITELALKTMSLRGKLPPELTKL), 118-141 (PYLKSIELCRNYLSGTIPMEWAKM), 143-165 (YLTSISVCANNLSGNLPAGLQNF), 166-189 (KNLTFLGVEGNQFSGPIPDELGNL), 190-212 (TSLTGLELASNKFTGILPGTLAR), 214-236 (VNLERVRICDNNFTGIIPAYIGN), 237-261 (WTRLQKLHLYASGLTGPIPDAVVRL), 263-283 (NLLELSLSDTTGIKSFPNLSS), 284-307 (KGLKRLILRNVGLSGPIPSYIWNL), 308-330 (TDLKILDLSFNKLNGIVQGVQNP), 332-351 (KNIYLTGNLLSGNIESGGLL), 352-374 (NSQSYIDLSYNNFSWSSSCQKGS), and 375-398 (TINTYQSSYSKNNLTGLPPCAVPA). 3 N-linked (GlcNAc...) asparagine glycosylation sites follow: N153, N167, and N188. Residues N225 and N236 are each glycosylated (N-linked (GlcNAc...) asparagine). N-linked (GlcNAc...) asparagine glycans are attached at residues N280 and N306. 4 N-linked (GlcNAc...) asparagine glycosylation sites follow: N363, N387, N469, and N558. A helical transmembrane segment spans residues 616-636 (LILGASGALVTIVLLAVGIYA). The Cytoplasmic segment spans residues 637–1019 (RGIYRRDNNR…STVENSSSSL (383 aa)). One can recognise a Protein kinase domain in the interval 673–946 (FDQANKLGEG…EAVKMLEGEI (274 aa)). ATP-binding positions include 679–687 (LGEGGFGSV) and K701. Phosphotyrosine is present on Y746. The active-site Proton acceptor is D797. S830 is subject to Phosphoserine. A phosphothreonine mark is found at T831 and T836. The residue at position 844 (Y844) is a Phosphotyrosine.

Belongs to the protein kinase superfamily. Ser/Thr protein kinase family.

The protein resides in the cell membrane. It carries out the reaction L-seryl-[protein] + ATP = O-phospho-L-seryl-[protein] + ADP + H(+). The enzyme catalyses L-threonyl-[protein] + ATP = O-phospho-L-threonyl-[protein] + ADP + H(+). The chain is Probable LRR receptor-like serine/threonine-protein kinase At1g29720 (RFK1) from Arabidopsis thaliana (Mouse-ear cress).